A 255-amino-acid polypeptide reads, in one-letter code: Small ribosomal subunit protein uS10m (255 aa).

The transit peptide at 1-32 (MALPAARSALSARAFIRPAAALNAAASSSRYL) directs the protein to the mitochondrion. Disordered regions lie at residues 30-52 (RYLS…NSET) and 220-255 (SEGE…AKSS). The segment covering 236 to 255 (DAAREEKPAEKLKEEEAKSS) has biased composition (basic and acidic residues).

The protein belongs to the universal ribosomal protein uS10 family. As to quaternary structure, part of the mitochondrial small ribosomal subunit.

Its subcellular location is the mitochondrion. Involved in mitochondrial genome encoded proteins translation. Involved in the binding of tRNA to the ribosomes. This is Small ribosomal subunit protein uS10m (RSM10) from Cryptococcus neoformans var. neoformans serotype D (strain B-3501A) (Filobasidiella neoformans).